The sequence spans 298 residues: Tyrosine recombinase XerC (298 aa).

The 87-residue stretch at 2-88 folds into the Core-binding (CB) domain; sequence TDLHTDVERY…ALRSFFDWLV (87 aa). One can recognise a Tyr recombinase domain in the interval 109-288; the sequence is HLPKNIDVDD…DFQHLASVYD (180 aa). Catalysis depends on residues arginine 148, lysine 172, histidine 240, arginine 243, and histidine 266. The O-(3'-phospho-DNA)-tyrosine intermediate role is filled by tyrosine 275.

The protein belongs to the 'phage' integrase family. XerC subfamily. Forms a cyclic heterotetrameric complex composed of two molecules of XerC and two molecules of XerD, in which XerC interacts with XerD via its C-terminal region, XerD interacts with XerC via its C-terminal region and so on.

It is found in the cytoplasm. Its activity is regulated as follows. FtsK may regulate the catalytic switch between XerC and XerD in the heterotetrameric complex during the two steps of the recombination process. Functionally, site-specific tyrosine recombinase, which acts by catalyzing the cutting and rejoining of the recombining DNA molecules. Binds cooperatively to specific DNA consensus sequences that are separated from XerD binding sites by a short central region, forming the heterotetrameric XerC-XerD complex that recombines DNA substrates. The complex is essential to convert dimers of the bacterial chromosome into monomers to permit their segregation at cell division. It also contributes to the segregational stability of plasmids. In the complex XerC specifically exchanges the top DNA strands. The polypeptide is Tyrosine recombinase XerC (Escherichia coli O6:K15:H31 (strain 536 / UPEC)).